The chain runs to 263 residues: Putative protein JayE (263 aa).

It belongs to the Mu gp47/PBSX XkdT family.

This Escherichia coli (strain K12) protein is Putative protein JayE (jayE).